A 35-amino-acid chain; its full sequence is Putative neurotoxin (35 aa).

Residues 1 to 35 (KEGYPKNSEGCKITCLFNDPYCKGLCINLSTQADY) form the LCN-type CS-alpha/beta domain.

Expressed by the venom gland.

Its subcellular location is the secreted. Its function is as follows. Causes paralysis and death in insects (A.domestica). This Rhopalurus junceus (Caribbean blue scorpion) protein is Putative neurotoxin.